The chain runs to 337 residues: uncharacterized protein (337 aa).

2 helical membrane passes run 4-24 and 26-46; these read FIFF…FSLI and LLLW…LFAL.

The protein belongs to the plectrovirus ORF2 family.

The protein localises to the host membrane. This is an uncharacterized protein from Spiroplasma melliferum (SpV1).